Here is a 586-residue protein sequence, read N- to C-terminus: Estrogen receptor (586 aa).

A modulating region spans residues 1 to 179; it reads MTMPLPNKTT…SMESTKETRY (179 aa). Residues 144–173 are disordered; that stretch reads FYRSSSDNRRQSGRERMSSANDKGPPSMES. The span at 149-160 shows a compositional bias: basic and acidic residues; the sequence is SDNRRQSGRERM. NR C4-type zinc fingers lie at residues 180 to 200 and 216 to 240; these read CAVC…CEGC and CPAT…LRKC. Positions 180–245 form a DNA-binding region, nuclear receptor; that stretch reads CAVCSDYASG…RLRKCYEVGM (66 aa). The hinge stretch occupies residues 246 to 302; it reads MKGGIRKDRRGGRLLKHKRQKEEQEQKNDVDPSEIRTASIWVNPSVKSMKLSPVLSL. Basic residues predominate over residues 252–264; that stretch reads KDRRGGRLLKHKR. The disordered stretch occupies residues 252–276; the sequence is KDRRGGRLLKHKRQKEEQEQKNDVD. The segment covering 265–276 has biased composition (basic and acidic residues); the sequence is QKEEQEQKNDVD. The NR LBD domain occupies 303–539; sequence TAEQLISALM…DLLLEMLDAH (237 aa). A compositionally biased stretch (basic and acidic residues) spans 543-556; it reads TPKDKTTTQEEDSR. The segment at 543–569 is disordered; it reads TPKDKTTTQEEDSRSPPTTTVNGASPC.

It belongs to the nuclear hormone receptor family. NR3 subfamily. Binds DNA as a homodimer. Can form a heterodimer with ER-beta.

It is found in the nucleus. In terms of biological role, the steroid hormones and their receptors are involved in the regulation of eukaryotic gene expression and affect cellular proliferation and differentiation in target tissues. The chain is Estrogen receptor (esr1) from Xenopus laevis (African clawed frog).